A 492-amino-acid polypeptide reads, in one-letter code: Trypanothione reductase (492 aa).

36–52 is a binding site for FAD; the sequence is DVQMVHGPPFFSALGGT. C53 and C58 form a disulfide bridge. H461 acts as the Proton acceptor in catalysis.

The protein belongs to the class-I pyridine nucleotide-disulfide oxidoreductase family. In terms of assembly, homodimer. It depends on FAD as a cofactor.

It localises to the cytoplasm. It carries out the reaction trypanothione + NADP(+) = trypanothione disulfide + NADPH + H(+). Trypanothione is the parasite analog of glutathione; this enzyme is the equivalent of glutathione reductase. This Trypanosoma cruzi protein is Trypanothione reductase (TPR).